The primary structure comprises 141 residues: Large ribosomal subunit protein uL11 (141 aa).

It belongs to the universal ribosomal protein uL11 family. As to quaternary structure, part of the ribosomal stalk of the 50S ribosomal subunit. Interacts with L10 and the large rRNA to form the base of the stalk. L10 forms an elongated spine to which L12 dimers bind in a sequential fashion forming a multimeric L10(L12)X complex. Post-translationally, one or more lysine residues are methylated.

In terms of biological role, forms part of the ribosomal stalk which helps the ribosome interact with GTP-bound translation factors. This Clostridium kluyveri (strain ATCC 8527 / DSM 555 / NBRC 12016 / NCIMB 10680 / K1) protein is Large ribosomal subunit protein uL11.